A 421-amino-acid polypeptide reads, in one-letter code: UDP-N-acetylglucosamine 1-carboxyvinyltransferase (421 aa).

Position 22–23 (22–23 (KN)) interacts with phosphoenolpyruvate. Arg93 lines the UDP-N-acetyl-alpha-D-glucosamine pocket. Cys117 (proton donor) is an active-site residue. Cys117 bears the 2-(S-cysteinyl)pyruvic acid O-phosphothioketal mark. Residues 122-126 (RPVDL), Asp308, and Val330 each bind UDP-N-acetyl-alpha-D-glucosamine.

Belongs to the EPSP synthase family. MurA subfamily.

It is found in the cytoplasm. It carries out the reaction phosphoenolpyruvate + UDP-N-acetyl-alpha-D-glucosamine = UDP-N-acetyl-3-O-(1-carboxyvinyl)-alpha-D-glucosamine + phosphate. It functions in the pathway cell wall biogenesis; peptidoglycan biosynthesis. Functionally, cell wall formation. Adds enolpyruvyl to UDP-N-acetylglucosamine. The polypeptide is UDP-N-acetylglucosamine 1-carboxyvinyltransferase (Ectopseudomonas mendocina (strain ymp) (Pseudomonas mendocina)).